The following is a 208-amino-acid chain: LexA repressor (208 aa).

Positions 29 to 49 (IREIGDSLNINSTSTVHNNIL) form a DNA-binding region, H-T-H motif. Catalysis depends on for autocatalytic cleavage activity residues Ser131 and Lys168.

It belongs to the peptidase S24 family. Homodimer.

The enzyme catalyses Hydrolysis of Ala-|-Gly bond in repressor LexA.. Functionally, represses a number of genes involved in the response to DNA damage (SOS response), including recA and lexA. In the presence of single-stranded DNA, RecA interacts with LexA causing an autocatalytic cleavage which disrupts the DNA-binding part of LexA, leading to derepression of the SOS regulon and eventually DNA repair. The chain is LexA repressor from Finegoldia magna (strain ATCC 29328 / DSM 20472 / WAL 2508) (Peptostreptococcus magnus).